Reading from the N-terminus, the 500-residue chain is Probable malate:quinone oxidoreductase (500 aa).

The protein belongs to the MQO family. FAD is required as a cofactor.

The catalysed reaction is (S)-malate + a quinone = a quinol + oxaloacetate. It participates in carbohydrate metabolism; tricarboxylic acid cycle; oxaloacetate from (S)-malate (quinone route): step 1/1. This Bacillus cereus (strain ATCC 10987 / NRS 248) protein is Probable malate:quinone oxidoreductase.